Reading from the N-terminus, the 250-residue chain is 3alpha-hydroxysteroid dehydrogenase (250 aa).

Residues N93, Y158, and K162 each contribute to the NADP(+) site. The active-site Proton acceptor is Y158.

Belongs to the short-chain dehydrogenases/reductases (SDR) family.

It carries out the reaction lithocholate + NADP(+) = 3-oxo-5beta-cholan-24-oate + NADPH + H(+). The catalysed reaction is deoxycholate + NADP(+) = 12alpha-hydroxy-3-oxo-5beta-cholan-24-oate + NADPH + H(+). It catalyses the reaction deoxycholate + NAD(+) = 12alpha-hydroxy-3-oxo-5beta-cholan-24-oate + NADH + H(+). The enzyme catalyses cholate + NADP(+) = 7alpha,12alpha-dihydroxy-3-oxo-5beta-cholan-24-oate + NADPH + H(+). It carries out the reaction chenodeoxycholate + NADP(+) = 3-oxochenodeoxycholate + NADPH + H(+). Functionally, involved in the modification of secondary bile acids into iso-bile acids (3beta-bile acids) via epimerization of the 3-OH group through a 3-oxo-intermediate. Catalyzes the oxidation of deoxycholate (DCA) and lithocholate (LCA) to yield 12-alpha-hydroxy-3-oxo-5-beta-cholan-24-oate (3-oxo-DCA) and 3-oxo-5-beta-cholan-24-oate (3-oxo-LCA), respectively. Is also able to catalyze the oxidation of cholate (CA) and chenodeoxycholate (CDCA) into 3-dehydrocholate (3-oxo-CA) and 7-alpha-hydroxy-3-oxo-5-beta-cholan-24-oate (3-oxo-CDCA), respectively. Can also catalyze the reverse reactions in vitro. Accepts both NADPH and NADH as cosubstrates. The conversion of the abundant bile acid DCA into isoDCA by the gut bacterium R.gnavus favors the growth of the keystone commensal genus Bacteroides, since isoDCA is less cytotoxic than its parent compound, DCA; iso-bile acids have thus a potential role in modulating gut community composition. This Mediterraneibacter gnavus (strain ATCC 29149 / DSM 114966 / JCM 6515 / VPI C7-9) (Ruminococcus gnavus) protein is 3alpha-hydroxysteroid dehydrogenase.